We begin with the raw amino-acid sequence, 80 residues long: Exodeoxyribonuclease 7 small subunit (80 aa).

This sequence belongs to the XseB family. Heterooligomer composed of large and small subunits.

It is found in the cytoplasm. It carries out the reaction Exonucleolytic cleavage in either 5'- to 3'- or 3'- to 5'-direction to yield nucleoside 5'-phosphates.. In terms of biological role, bidirectionally degrades single-stranded DNA into large acid-insoluble oligonucleotides, which are then degraded further into small acid-soluble oligonucleotides. This chain is Exodeoxyribonuclease 7 small subunit, found in Pseudomonas putida (strain ATCC 700007 / DSM 6899 / JCM 31910 / BCRC 17059 / LMG 24140 / F1).